The primary structure comprises 273 residues: Probable nicotinate-nucleotide pyrophosphorylase [carboxylating] (273 aa).

Residues Arg-91, 124–126 (TRK), Arg-148, Lys-158, Glu-188, Asp-209, 235–237 (SGN), and 256–258 (VGA) contribute to the substrate site.

The protein belongs to the NadC/ModD family. In terms of assembly, hexamer formed by 3 homodimers.

The catalysed reaction is nicotinate beta-D-ribonucleotide + CO2 + diphosphate = quinolinate + 5-phospho-alpha-D-ribose 1-diphosphate + 2 H(+). It functions in the pathway cofactor biosynthesis; NAD(+) biosynthesis; nicotinate D-ribonucleotide from quinolinate: step 1/1. Its function is as follows. Involved in the catabolism of quinolinic acid (QA). In Helicobacter pylori (strain ATCC 700392 / 26695) (Campylobacter pylori), this protein is Probable nicotinate-nucleotide pyrophosphorylase [carboxylating] (nadC).